Reading from the N-terminus, the 103-residue chain is Small ribosomal subunit protein uS10 (103 aa).

The protein belongs to the universal ribosomal protein uS10 family. As to quaternary structure, part of the 30S ribosomal subunit.

Its function is as follows. Involved in the binding of tRNA to the ribosomes. In Paraburkholderia xenovorans (strain LB400), this protein is Small ribosomal subunit protein uS10.